We begin with the raw amino-acid sequence, 176 residues long: Large ribosomal subunit protein uL6 (176 aa).

Belongs to the universal ribosomal protein uL6 family. In terms of assembly, part of the 50S ribosomal subunit.

Its function is as follows. This protein binds to the 23S rRNA, and is important in its secondary structure. It is located near the subunit interface in the base of the L7/L12 stalk, and near the tRNA binding site of the peptidyltransferase center. The polypeptide is Large ribosomal subunit protein uL6 (Methanothrix thermoacetophila (strain DSM 6194 / JCM 14653 / NBRC 101360 / PT) (Methanosaeta thermophila)).